The sequence spans 166 residues: Large ribosomal subunit protein uL10 (166 aa).

The protein belongs to the universal ribosomal protein uL10 family. In terms of assembly, part of the ribosomal stalk of the 50S ribosomal subunit. The N-terminus interacts with L11 and the large rRNA to form the base of the stalk. The C-terminus forms an elongated spine to which L12 dimers bind in a sequential fashion forming a multimeric L10(L12)X complex.

Functionally, forms part of the ribosomal stalk, playing a central role in the interaction of the ribosome with GTP-bound translation factors. The polypeptide is Large ribosomal subunit protein uL10 (Pseudomonas fluorescens (strain Pf0-1)).